Reading from the N-terminus, the 169-residue chain is uncharacterized protein (169 aa).

A helical transmembrane segment spans residues 10 to 30; it reads YFVTILIIIIIILIVLLIVFL. Positions 98–123 are disordered; it reads QSKPINKNNQQTKNTPTPLDDRPDLS. Low complexity predominate over residues 100-115; the sequence is KPINKNNQQTKNTPTP.

The protein localises to the membrane. This is an uncharacterized protein from Acanthamoeba polyphaga (Amoeba).